Reading from the N-terminus, the 280-residue chain is Phosphatidylserine decarboxylase proenzyme (280 aa).

Residues Asp88, His145, and Ser249 each act as charge relay system; for autoendoproteolytic cleavage activity in the active site. Ser249 acts as the Schiff-base intermediate with substrate; via pyruvic acid; for decarboxylase activity in catalysis. Residue Ser249 is modified to Pyruvic acid (Ser); by autocatalysis.

It belongs to the phosphatidylserine decarboxylase family. PSD-B subfamily. Prokaryotic type I sub-subfamily. In terms of assembly, heterodimer of a large membrane-associated beta subunit and a small pyruvoyl-containing alpha subunit. It depends on pyruvate as a cofactor. Is synthesized initially as an inactive proenzyme. Formation of the active enzyme involves a self-maturation process in which the active site pyruvoyl group is generated from an internal serine residue via an autocatalytic post-translational modification. Two non-identical subunits are generated from the proenzyme in this reaction, and the pyruvate is formed at the N-terminus of the alpha chain, which is derived from the carboxyl end of the proenzyme. The autoendoproteolytic cleavage occurs by a canonical serine protease mechanism, in which the side chain hydroxyl group of the serine supplies its oxygen atom to form the C-terminus of the beta chain, while the remainder of the serine residue undergoes an oxidative deamination to produce ammonia and the pyruvoyl prosthetic group on the alpha chain. During this reaction, the Ser that is part of the protease active site of the proenzyme becomes the pyruvoyl prosthetic group, which constitutes an essential element of the active site of the mature decarboxylase.

The protein resides in the cell membrane. The enzyme catalyses a 1,2-diacyl-sn-glycero-3-phospho-L-serine + H(+) = a 1,2-diacyl-sn-glycero-3-phosphoethanolamine + CO2. The protein operates within phospholipid metabolism; phosphatidylethanolamine biosynthesis; phosphatidylethanolamine from CDP-diacylglycerol: step 2/2. Its function is as follows. Catalyzes the formation of phosphatidylethanolamine (PtdEtn) from phosphatidylserine (PtdSer). This Chromobacterium violaceum (strain ATCC 12472 / DSM 30191 / JCM 1249 / CCUG 213 / NBRC 12614 / NCIMB 9131 / NCTC 9757 / MK) protein is Phosphatidylserine decarboxylase proenzyme.